The following is a 359-amino-acid chain: CMP-N-acetylneuraminate-poly-alpha-2,8-sialyltransferase (359 aa).

Residues Met1–Arg7 lie on the Cytoplasmic side of the membrane. A helical; Signal-anchor for type II membrane protein transmembrane segment spans residues Trp8–Tyr20. Residues Lys21–Gln359 lie on the Lumenal side of the membrane. 3 N-linked (GlcNAc...) asparagine glycosylation sites follow: Asn50, Asn74, and Asn119. Intrachain disulfides connect Cys142-Cys292 and Cys156-Cys356. Residues Asn147 and Asn170 each contribute to the CMP-N-acetyl-beta-neuraminate site. 2 N-linked (GlcNAc...) asparagine glycosylation sites follow: Asn204 and Asn219. CMP-N-acetyl-beta-neuraminate contacts are provided by Ser279, Thr280, Gly281, and Trp301. Residue His331 is the Proton donor/acceptor of the active site.

Belongs to the glycosyltransferase 29 family. Post-translationally, autopolysialylated.

It is found in the golgi apparatus membrane. The protein localises to the secreted. It carries out the reaction [N-acetyl-alpha-D-neuraminosyl-(2-&gt;8)](n) + CMP-N-acetyl-beta-neuraminate = [N-acetyl-alpha-D-neuraminosyl-(2-&gt;8)](n+1) + CMP + H(+). Its pathway is protein modification; protein glycosylation. Functionally, catalyzes the transfer of a sialic acid from a CMP-linked sialic acid donor onto a terminal alpha-2,3-, alpha-2,6-, or alpha-2,8-linked sialic acid of an N-linked glycan protein acceptor through alpha-2,8-linkages. Therefore, participates in polysialic acid synthesis on various sialylated N-acetyllactosaminyl oligosaccharides, including NCAM1 N-glycans, FETUB N-glycans and AHSG. It is noteworthy that alpha-2,3-linked sialic acid is apparently a better acceptor than alpha-2,6-linked sialic acid. This Cricetulus griseus (Chinese hamster) protein is CMP-N-acetylneuraminate-poly-alpha-2,8-sialyltransferase.